The chain runs to 549 residues: Glucose-6-phosphate isomerase (549 aa).

The active-site Proton donor is Glu-353. Catalysis depends on residues His-384 and Lys-510.

It belongs to the GPI family.

It is found in the cytoplasm. The enzyme catalyses alpha-D-glucose 6-phosphate = beta-D-fructose 6-phosphate. It functions in the pathway carbohydrate biosynthesis; gluconeogenesis. The protein operates within carbohydrate degradation; glycolysis; D-glyceraldehyde 3-phosphate and glycerone phosphate from D-glucose: step 2/4. Its function is as follows. Catalyzes the reversible isomerization of glucose-6-phosphate to fructose-6-phosphate. The sequence is that of Glucose-6-phosphate isomerase from Mycolicibacterium smegmatis (Mycobacterium smegmatis).